The chain runs to 912 residues: Transcription factor bHLH140 (912 aa).

The segment at 1–57 (MDDFNLRSENPNSSSTTSSSSSSFHRHKSETGNTKRSRSTSTLSTDPQSVAARDRRH) is disordered. Low complexity predominate over residues 13–23 (SSSTTSSSSSS). The bHLH domain occupies 43-92 (LSTDPQSVAARDRRHRISDRFKILQSMVPGGAKMDTVSMLDEAISYVKFL). ATP is bound at residue 234-241 (GPPGSGKS). The Macro domain maps to 511-690 (KAKASQKNID…KYKGSQDKAV (180 aa)). Positions 657–666 (PKRSSQTAVS) are enriched in polar residues. Residues 657 to 706 (PKRSSQTAVSDSGEDIKEDSERNKKYKGSQDKAVTNNLESESLEDTRGSG) form a disordered region. The 110-residue stretch at 720–829 (LHSIAMHPER…SQDFNSDSLK (110 aa)) folds into the HIT domain. The segment at 870–893 (LRCNRCRSAHPNIPKLKSHVRSCH) adopts a C2H2-type zinc-finger fold.

As to quaternary structure, homodimer.

It is found in the nucleus. The polypeptide is Transcription factor bHLH140 (BHLH140) (Arabidopsis thaliana (Mouse-ear cress)).